The sequence spans 374 residues: Ribosomal RNA large subunit methyltransferase G (374 aa).

This sequence belongs to the methyltransferase superfamily. RlmG family.

It localises to the cytoplasm. The catalysed reaction is guanosine(1835) in 23S rRNA + S-adenosyl-L-methionine = N(2)-methylguanosine(1835) in 23S rRNA + S-adenosyl-L-homocysteine + H(+). Specifically methylates the guanine in position 1835 (m2G1835) of 23S rRNA. The polypeptide is Ribosomal RNA large subunit methyltransferase G (Pseudomonas aeruginosa (strain UCBPP-PA14)).